We begin with the raw amino-acid sequence, 142 residues long: Large ribosomal subunit protein uL11 (142 aa).

It belongs to the universal ribosomal protein uL11 family. Part of the ribosomal stalk of the 50S ribosomal subunit. Interacts with L10 and the large rRNA to form the base of the stalk. L10 forms an elongated spine to which L12 dimers bind in a sequential fashion forming a multimeric L10(L12)X complex. One or more lysine residues are methylated.

In terms of biological role, forms part of the ribosomal stalk which helps the ribosome interact with GTP-bound translation factors. The chain is Large ribosomal subunit protein uL11 from Rhodopseudomonas palustris (strain HaA2).